Here is a 194-residue protein sequence, read N- to C-terminus: NADH-quinone oxidoreductase subunit B 1 (194 aa).

Residues Cys-73, Cys-74, Cys-138, and Cys-168 each coordinate [4Fe-4S] cluster.

It belongs to the complex I 20 kDa subunit family. As to quaternary structure, NDH-1 is composed of 14 different subunits. Subunits NuoB, C, D, E, F, and G constitute the peripheral sector of the complex. Requires [4Fe-4S] cluster as cofactor.

It localises to the cell inner membrane. It catalyses the reaction a quinone + NADH + 5 H(+)(in) = a quinol + NAD(+) + 4 H(+)(out). Its function is as follows. NDH-1 shuttles electrons from NADH, via FMN and iron-sulfur (Fe-S) centers, to quinones in the respiratory chain. The immediate electron acceptor for the enzyme in this species is believed to be ubiquinone. Couples the redox reaction to proton translocation (for every two electrons transferred, four hydrogen ions are translocated across the cytoplasmic membrane), and thus conserves the redox energy in a proton gradient. The polypeptide is NADH-quinone oxidoreductase subunit B 1 (Rhizobium etli (strain CIAT 652)).